The sequence spans 427 residues: Piwi protein (427 aa).

The segment at 38 to 167 is mid domain; that stretch reads PYEVPSLKYN…VQFVSKLGGK (130 aa). Positions 110-406 constitute a Piwi domain; the sequence is GIMLVLPEYN…VAGIIANVNR (297 aa). A binds 5'-phosphorylated end of guide DNA region spans residues 118-124; that stretch reads YNTPLYY. The binds target DNA stretch occupies residues 147-148; that stretch reads RN. Positions 150 to 155 are binds guide DNA; it reads TFYVDN. A divalent metal cation is bound by residues Q159 and L427. Positions 168-427 are PIWI domain; it reads PWILNVDPEK…RSLQTNPWFL (260 aa).

It belongs to the argonaute family. Short pAgo subfamily. As to quaternary structure, homodimer probably stabilized by DNA. Each subunit is capable of interacting with a DNA molecule. Requires a divalent metal cation as cofactor.

Its function is as follows. Might play a role in defense against invading genetic elements, using short nucleic acid sequences as guides to bind complementary target strands, resulting in slicing of the target nucleic acid. Binds nucleic acids with decreasing affinity in the following order; ssDNA, ssRNA, dsDNA, RNA-DNA, RNA-RNA. Association of the 5' seed region of the guide strand (nucleotides 2-7) with AfPiwi increases affinity for the corresponding target strand; the greatest increase in affinity is for guide DNA with target RNA. The chain is Piwi protein from Archaeoglobus fulgidus (strain ATCC 49558 / DSM 4304 / JCM 9628 / NBRC 100126 / VC-16).